The chain runs to 256 residues: Ribonuclease HII (256 aa).

Positions 72 to 256 (QYIAGMDEVG…SFNPVPKYLN (185 aa)) constitute an RNase H type-2 domain. A divalent metal cation is bound by residues D78, E79, and D170.

The protein belongs to the RNase HII family. Mn(2+) serves as cofactor. Requires Mg(2+) as cofactor.

Its subcellular location is the cytoplasm. The catalysed reaction is Endonucleolytic cleavage to 5'-phosphomonoester.. Functionally, endonuclease that specifically degrades the RNA of RNA-DNA hybrids. The sequence is that of Ribonuclease HII from Limosilactobacillus reuteri (strain DSM 20016) (Lactobacillus reuteri).